The primary structure comprises 117 residues: Large ribosomal subunit protein uL18 (117 aa).

It belongs to the universal ribosomal protein uL18 family. As to quaternary structure, part of the 50S ribosomal subunit; part of the 5S rRNA/L5/L18/L25 subcomplex. Contacts the 5S and 23S rRNAs.

Functionally, this is one of the proteins that bind and probably mediate the attachment of the 5S RNA into the large ribosomal subunit, where it forms part of the central protuberance. In Klebsiella pneumoniae (strain 342), this protein is Large ribosomal subunit protein uL18.